A 185-amino-acid chain; its full sequence is piRNA-mediated silencing protein C19orf84 homolog (185 aa).

Disordered stretches follow at residues 1–38 (MDEL…PSLL) and 93–185 (HIWP…EADY). The segment covering 11-25 (NGDNLSLPSAGTESW) has biased composition (polar residues). The segment covering 26-38 (PTSATPGLPPSLL) has biased composition (low complexity). The span at 118–130 (RPSRGWGRGRGRG) shows a compositional bias: basic residues. A compositionally biased stretch (basic and acidic residues) spans 139-150 (GPERAEERERNM).

In terms of assembly, interacts with SPOCD1.

It is found in the nucleus. It localises to the nucleoplasm. Its function is as follows. Protein adapter involved in piRNA-directed transposon methylation by connecting PIWIL4-piRNA and DNA methylation machineries. The PIWIL4-piRNA pathway plays a central role during spermatogenesis by directing transposon DNA methylation and silencing, thereby preventing their mobilization, which is essential for the germline integrity. This chain is piRNA-mediated silencing protein C19orf84 homolog, found in Mus musculus (Mouse).